Consider the following 475-residue polypeptide: UDP-N-acetylmuramate--L-alanine ligase (475 aa).

ATP is bound at residue 125–131 (GTHGKTT).

It belongs to the MurCDEF family.

The protein localises to the cytoplasm. The enzyme catalyses UDP-N-acetyl-alpha-D-muramate + L-alanine + ATP = UDP-N-acetyl-alpha-D-muramoyl-L-alanine + ADP + phosphate + H(+). It participates in cell wall biogenesis; peptidoglycan biosynthesis. Its function is as follows. Cell wall formation. This is UDP-N-acetylmuramate--L-alanine ligase from Haemophilus influenzae (strain PittGG).